Reading from the N-terminus, the 230-residue chain is 2,3-bisphosphoglycerate-dependent phosphoglycerate mutase (230 aa).

Residues 8-15 (RHGESEWN), 21-22 (TG), Arg-60, 87-90 (ERHY), Lys-98, 114-115 (RR), and 183-184 (GN) each bind substrate. The Tele-phosphohistidine intermediate role is filled by His-9. Glu-87 functions as the Proton donor/acceptor in the catalytic mechanism.

The protein belongs to the phosphoglycerate mutase family. BPG-dependent PGAM subfamily.

It catalyses the reaction (2R)-2-phosphoglycerate = (2R)-3-phosphoglycerate. It functions in the pathway carbohydrate degradation; glycolysis; pyruvate from D-glyceraldehyde 3-phosphate: step 3/5. Catalyzes the interconversion of 2-phosphoglycerate and 3-phosphoglycerate. The polypeptide is 2,3-bisphosphoglycerate-dependent phosphoglycerate mutase (Streptococcus agalactiae serotype Ia (strain ATCC 27591 / A909 / CDC SS700)).